The primary structure comprises 554 residues: Glucose-6-phosphate isomerase (554 aa).

Glutamate 359 acts as the Proton donor in catalysis. Catalysis depends on residues histidine 390 and lysine 518.

The protein belongs to the GPI family.

It localises to the cytoplasm. It carries out the reaction alpha-D-glucose 6-phosphate = beta-D-fructose 6-phosphate. It functions in the pathway carbohydrate biosynthesis; gluconeogenesis. Its pathway is carbohydrate degradation; glycolysis; D-glyceraldehyde 3-phosphate and glycerone phosphate from D-glucose: step 2/4. Functionally, catalyzes the reversible isomerization of glucose-6-phosphate to fructose-6-phosphate. In Pseudomonas syringae pv. syringae (strain B728a), this protein is Glucose-6-phosphate isomerase.